We begin with the raw amino-acid sequence, 111 residues long: UPF0145 protein Bphy_3680 (111 aa).

It belongs to the UPF0145 family.

This is UPF0145 protein Bphy_3680 from Paraburkholderia phymatum (strain DSM 17167 / CIP 108236 / LMG 21445 / STM815) (Burkholderia phymatum).